The chain runs to 459 residues: Ribulose bisphosphate carboxylase (459 aa).

Asparagine 111 serves as a coordination point for substrate. Residue lysine 166 is the Proton acceptor of the active site. Lysine 168 serves as a coordination point for substrate. Mg(2+)-binding residues include lysine 191, aspartate 193, and glutamate 194. N6-carboxylysine is present on lysine 191. The active-site Proton acceptor is the histidine 287. Substrate contacts are provided by arginine 288, histidine 321, and serine 368.

Belongs to the RuBisCO large chain family. Type II subfamily. Homodimer. It depends on Mg(2+) as a cofactor.

It carries out the reaction 2 (2R)-3-phosphoglycerate + 2 H(+) = D-ribulose 1,5-bisphosphate + CO2 + H2O. The enzyme catalyses D-ribulose 1,5-bisphosphate + O2 = 2-phosphoglycolate + (2R)-3-phosphoglycerate + 2 H(+). In terms of biological role, ruBisCO catalyzes two reactions: the carboxylation of D-ribulose 1,5-bisphosphate, the primary event in carbon dioxide fixation, as well as the oxidative fragmentation of the pentose substrate. Both reactions occur simultaneously and in competition at the same active site. The chain is Ribulose bisphosphate carboxylase from Albidiferax ferrireducens (strain ATCC BAA-621 / DSM 15236 / T118) (Rhodoferax ferrireducens).